Reading from the N-terminus, the 351-residue chain is 1-acylglycerol-3-phosphate O-acyltransferase ABHD5 (351 aa).

Positions 79–184 constitute an AB hydrolase-1 domain; it reads PLVLLHGFGG…LILVEPWGFP (106 aa). Residue Ser-124 is modified to Phosphoserine. Positions 329-334 match the HXXXXD motif motif; it reads HYVYAD.

Belongs to the peptidase S33 family. ABHD4/ABHD5 subfamily. Interacts with ADRP. Interacts with PLIN. Interacts with and PNPLA2. Interacts with PLIN5; promotes interaction with PNPLA2. In terms of tissue distribution, highly expressed in the adipose tissue and testes. Weakly expressed in the liver, muscle, kidney, and heart. Expressed by upper epidermal layers and dermal fibroblasts in skin, hepatocytes and hypothalamus in brain (at protein level).

The protein localises to the cytoplasm. It is found in the lipid droplet. Its subcellular location is the cytosol. It carries out the reaction a 1-acyl-sn-glycero-3-phosphate + an acyl-CoA = a 1,2-diacyl-sn-glycero-3-phosphate + CoA. The catalysed reaction is 1-(9Z-octadecenoyl)-sn-glycero-3-phosphate + (9Z)-octadecenoyl-CoA = 1,2-di-(9Z-octadecenoyl)-sn-glycero-3-phosphate + CoA. The enzyme catalyses 1-(9Z-octadecenoyl)-sn-glycero-3-phosphate + hexadecanoyl-CoA = 1-(9Z)-octadecenoyl-2-hexadecanoyl-sn-glycero-3-phosphate + CoA. It catalyses the reaction 1-(9Z-octadecenoyl)-sn-glycero-3-phosphate + octadecanoyl-CoA = 1-(9Z-octadecenoyl)-2-octadecanoyl-sn-glycero-3-phosphate + CoA. It carries out the reaction 1-(9Z-octadecenoyl)-sn-glycero-3-phosphate + (5Z,8Z,11Z,14Z)-eicosatetraenoyl-CoA = 1-(9Z)-octadecenoyl-2-(5Z,8Z,11Z,14Z)-eicosatetraenoyl-sn-glycero-3-phosphate + CoA. The catalysed reaction is eicosanoyl-CoA + 1-(9Z-octadecenoyl)-sn-glycero-3-phosphate = 1-(9Z)-octadecenoyl-2-eicosanoyl-sn-glycero-3-phosphate + CoA. The enzyme catalyses 1-hexadecanoyl-sn-glycero-3-phosphate + (9Z)-octadecenoyl-CoA = 1-hexadecanoyl-2-(9Z-octadecenoyl)-sn-glycero-3-phosphate + CoA. It catalyses the reaction 1-octadecanoyl-sn-glycero-3-phosphate + (9Z)-octadecenoyl-CoA = 1-octadecanoyl-2-(9Z-octadecenoyl)-sn-glycero-3-phosphate + CoA. It carries out the reaction 1-(5Z,8Z,11Z,14Z-eicosatetraenoyl)-sn-glycero-3-phosphate + (9Z)-octadecenoyl-CoA = 1-(5Z,8Z,11Z,14Z)-eicosatetraenoyl-2-(9Z)-octadecenoyl-sn-glycero-3-phosphate + CoA. With respect to regulation, acyltransferase activity is inhibited by detergents such as Triton X-100 and 3-[(3-cholamidopropyl)dimethylammonio]-1-propanesulfonate (CHAPS). Acyltransferase activity is inhibited by the presence of magnesium and calcium. In terms of biological role, coenzyme A-dependent lysophosphatidic acid acyltransferase that catalyzes the transfer of an acyl group on a lysophosphatidic acid. Functions preferentially with 1-oleoyl-lysophosphatidic acid followed by 1-palmitoyl-lysophosphatidic acid, 1-stearoyl-lysophosphatidic acid and 1-arachidonoyl-lysophosphatidic acid as lipid acceptor. Functions preferentially with arachidonoyl-CoA followed by oleoyl-CoA as acyl group donors. Functions in phosphatidic acid biosynthesis. May regulate the cellular storage of triacylglycerol through activation of the phospholipase PNPLA2. Involved in keratinocyte differentiation. Regulates lipid droplet fusion. The protein is 1-acylglycerol-3-phosphate O-acyltransferase ABHD5 of Mus musculus (Mouse).